The following is a 391-amino-acid chain: 3-ketoacyl-CoA thiolase (391 aa).

Cys95 acts as the Acyl-thioester intermediate in catalysis. Catalysis depends on proton acceptor residues His347 and Cys377.

Belongs to the thiolase-like superfamily. Thiolase family. Heterotetramer of two alpha chains (FadB) and two beta chains (FadA).

It is found in the cytoplasm. The catalysed reaction is an acyl-CoA + acetyl-CoA = a 3-oxoacyl-CoA + CoA. It functions in the pathway lipid metabolism; fatty acid beta-oxidation. Catalyzes the final step of fatty acid oxidation in which acetyl-CoA is released and the CoA ester of a fatty acid two carbons shorter is formed. The polypeptide is 3-ketoacyl-CoA thiolase (Ectopseudomonas oleovorans (Pseudomonas oleovorans)).